A 219-amino-acid polypeptide reads, in one-letter code: UPF0502 protein Ppro_2903 (219 aa).

Belongs to the UPF0502 family.

The sequence is that of UPF0502 protein Ppro_2903 from Pelobacter propionicus (strain DSM 2379 / NBRC 103807 / OttBd1).